The sequence spans 842 residues: Alanine--tRNA ligase (842 aa).

4 residues coordinate Zn(2+): H549, H553, C650, and H654.

The protein belongs to the class-II aminoacyl-tRNA synthetase family. It depends on Zn(2+) as a cofactor.

It is found in the cytoplasm. The catalysed reaction is tRNA(Ala) + L-alanine + ATP = L-alanyl-tRNA(Ala) + AMP + diphosphate. In terms of biological role, catalyzes the attachment of alanine to tRNA(Ala) in a two-step reaction: alanine is first activated by ATP to form Ala-AMP and then transferred to the acceptor end of tRNA(Ala). Also edits incorrectly charged Ser-tRNA(Ala) and Gly-tRNA(Ala) via its editing domain. The polypeptide is Alanine--tRNA ligase (Campylobacter jejuni subsp. doylei (strain ATCC BAA-1458 / RM4099 / 269.97)).